A 706-amino-acid polypeptide reads, in one-letter code: Elongation factor G (706 aa).

The 288-residue stretch at 8 to 295 (ERYRNFGIMA…AVIDYLPSPL (288 aa)) folds into the tr-type G domain. Residues 17–24 (AHIDAGKT), 92–96 (DTPGH), and 146–149 (NKMD) each bind GTP.

The protein belongs to the TRAFAC class translation factor GTPase superfamily. Classic translation factor GTPase family. EF-G/EF-2 subfamily.

Its subcellular location is the cytoplasm. Catalyzes the GTP-dependent ribosomal translocation step during translation elongation. During this step, the ribosome changes from the pre-translocational (PRE) to the post-translocational (POST) state as the newly formed A-site-bound peptidyl-tRNA and P-site-bound deacylated tRNA move to the P and E sites, respectively. Catalyzes the coordinated movement of the two tRNA molecules, the mRNA and conformational changes in the ribosome. The sequence is that of Elongation factor G from Jannaschia sp. (strain CCS1).